Here is a 359-residue protein sequence, read N- to C-terminus: DNA replication and repair protein RecF (359 aa).

Residue 30 to 37 (GQNAQGKT) coordinates ATP.

This sequence belongs to the RecF family.

Its subcellular location is the cytoplasm. Functionally, the RecF protein is involved in DNA metabolism; it is required for DNA replication and normal SOS inducibility. RecF binds preferentially to single-stranded, linear DNA. It also seems to bind ATP. This is DNA replication and repair protein RecF from Lactococcus lactis subsp. cremoris (strain MG1363).